The sequence spans 291 residues: NAD kinase (291 aa).

The active-site Proton acceptor is D72. Residues 72 to 73, 146 to 147, R157, R174, D176, 187 to 192, and Q247 contribute to the NAD(+) site; these read DG, ND, and TAYSLS.

Belongs to the NAD kinase family. A divalent metal cation is required as a cofactor.

The protein resides in the cytoplasm. It catalyses the reaction NAD(+) + ATP = ADP + NADP(+) + H(+). Involved in the regulation of the intracellular balance of NAD and NADP, and is a key enzyme in the biosynthesis of NADP. Catalyzes specifically the phosphorylation on 2'-hydroxyl of the adenosine moiety of NAD to yield NADP. This chain is NAD kinase, found in Hydrogenovibrio crunogenus (strain DSM 25203 / XCL-2) (Thiomicrospira crunogena).